A 414-amino-acid polypeptide reads, in one-letter code: STAGA complex 65 subunit gamma (414 aa).

The interval 87-108 is disordered; sequence NQQQTEGVKTEESEPLPSCPGS. Phosphoserine is present on Ser-108. Lys-271 participates in a covalent cross-link: Glycyl lysine isopeptide (Lys-Gly) (interchain with G-Cter in SUMO2). Phosphoserine occurs at positions 323 and 334. The interval 346 to 414 is disordered; the sequence is PQESEEGNVS…QRCKKRMRKI (69 aa). A compositionally biased stretch (low complexity) spans 386 to 395; sequence SSYGSHSTDS.

As to quaternary structure, component of the STAGA transcription coactivator-HAT complex, at least composed of SUPT3H, SUPT7L, GCN5L2, TAF5L, TAF6L, TADA3L, TAD1L, TAF10, TAF12 and TAF9. Post-translationally, sumoylated. As to expression, expressed at high levels in adenocarcinomas and gliomas and low in esophageal cancers and malignant hematological disease. Also expressed at high level in the thymus, low in peripheral blood mononuclear cells, and lowest in the stomach, small intestine, and skeletal muscle.

The protein resides in the nucleus. The polypeptide is STAGA complex 65 subunit gamma (SUPT7L) (Homo sapiens (Human)).